Reading from the N-terminus, the 749-residue chain is Polyribonucleotide nucleotidyltransferase (749 aa).

2 residues coordinate Mg(2+): aspartate 487 and aspartate 493. Residues 554 to 613 (PSTTTIKIDKDKIRDIIGPGGKIIKEICETSGAKIDISDDGTVSVYASDRDKLKVALDKI) form the KH domain. Positions 623 to 691 (GEIFNGTVVK…NKGKAKLTIK (69 aa)) constitute an S1 motif domain. The tract at residues 691 to 749 (KNADKDKSSNNTKPKTNVNNTNKDNSEPEQRRDSSKKRAWNEDNNAETAEVITERKYFN) is disordered. Over residues 699–713 (SNNTKPKTNVNNTNK) the composition is skewed to low complexity. Positions 714–723 (DNSEPEQRRD) are enriched in basic and acidic residues.

The protein belongs to the polyribonucleotide nucleotidyltransferase family. Mg(2+) is required as a cofactor.

It is found in the cytoplasm. The enzyme catalyses RNA(n+1) + phosphate = RNA(n) + a ribonucleoside 5'-diphosphate. Functionally, involved in mRNA degradation. Catalyzes the phosphorolysis of single-stranded polyribonucleotides processively in the 3'- to 5'-direction. The sequence is that of Polyribonucleotide nucleotidyltransferase from Rickettsia conorii (strain ATCC VR-613 / Malish 7).